Here is a 388-residue protein sequence, read N- to C-terminus: Chaperone protein DnaJ 1 (388 aa).

The region spanning 10–74 (DFYKELGVSS…VKRKEYDETR (65 aa)) is the J domain. A CR-type zinc finger spans residues 159-237 (GVAMPLRLTS…CKGTGVTTRT (79 aa)). Residues cysteine 172, cysteine 175, cysteine 189, cysteine 192, cysteine 211, cysteine 214, cysteine 225, and cysteine 228 each coordinate Zn(2+). 4 CXXCXGXG motif repeats span residues 172 to 179 (CTNCHGSG), 189 to 196 (CSTCNGSG), 211 to 218 (CTECRGSG), and 225 to 232 (CEECKGTG).

The protein belongs to the DnaJ family. In terms of assembly, homodimer. It depends on Zn(2+) as a cofactor.

It is found in the cytoplasm. Participates actively in the response to hyperosmotic and heat shock by preventing the aggregation of stress-denatured proteins and by disaggregating proteins, also in an autonomous, DnaK-independent fashion. Unfolded proteins bind initially to DnaJ; upon interaction with the DnaJ-bound protein, DnaK hydrolyzes its bound ATP, resulting in the formation of a stable complex. GrpE releases ADP from DnaK; ATP binding to DnaK triggers the release of the substrate protein, thus completing the reaction cycle. Several rounds of ATP-dependent interactions between DnaJ, DnaK and GrpE are required for fully efficient folding. Also involved, together with DnaK and GrpE, in the DNA replication of plasmids through activation of initiation proteins. The protein is Chaperone protein DnaJ 1 of Mycobacterium leprae (strain TN).